The primary structure comprises 246 residues: ATP synthase subunit a, chloroplastic (246 aa).

The next 5 membrane-spanning stretches (helical) occupy residues 35 to 55 (GQVL…GLIA), 94 to 114 (VPFI…GALL), 132 to 152 (DINT…YAGI), 198 to 218 (LVVG…VMLL), and 219 to 239 (GVFT…AYIG).

It belongs to the ATPase A chain family. In terms of assembly, F-type ATPases have 2 components, CF(1) - the catalytic core - and CF(0) - the membrane proton channel. CF(1) has five subunits: alpha(3), beta(3), gamma(1), delta(1), epsilon(1). CF(0) has four main subunits: a, b, b' and c.

The protein localises to the plastid. It is found in the chloroplast thylakoid membrane. Key component of the proton channel; it plays a direct role in the translocation of protons across the membrane. The polypeptide is ATP synthase subunit a, chloroplastic (Stigeoclonium helveticum (Green alga)).